We begin with the raw amino-acid sequence, 1235 residues long: High-affinity potassium transport protein (1235 aa).

At serine 15 the chain carries Phosphoserine. 2 helical membrane-spanning segments follow: residues 49-70 and 78-98; these read SFIA…ILLY and IDTL…TVDI. Asparagine 100 carries an N-linked (GlcNAc...) asparagine glycan. The helical transmembrane segment at 107 to 127 threads the bilayer; sequence IVLYIVCCISTPIAVHSCLAF. 4 disordered regions span residues 161–310, 323–344, 361–441, and 488–565; these read LTAR…SPAD, EATA…GTRY, KIKI…TKPP, and RLST…HQLQ. Residues 164-179 are compositionally biased toward polar residues; that stretch reads RTMTKNRTGTQRTSYP. Asparagine 169 carries N-linked (GlcNAc...) asparagine glycosylation. Residues 198–217 show a composition bias toward basic and acidic residues; sequence VNRDEQDSVHSDQNSHDISR. The span at 219–232 shows a compositional bias: low complexity; it reads SSNNNTNHNGSSGS. 2 N-linked (GlcNAc...) asparagine glycosylation sites follow: asparagine 222 and asparagine 227. Residues 237-247 show a composition bias toward acidic residues; it reads VKEDETDDNGE. The span at 248-274 shows a compositional bias: polar residues; it reads YQENNSYSTVGSSSNTVADESLNQKPK. Residue asparagine 251 is glycosylated (N-linked (GlcNAc...) asparagine). Asparagine 369 and asparagine 383 each carry an N-linked (GlcNAc...) asparagine glycan. Polar residues-rich tracts occupy residues 370–415 and 490–502; these read ESNT…SNSG and STGS…SNNV. A Phosphoserine modification is found at serine 414. Asparagine 497, asparagine 501, and asparagine 532 each carry an N-linked (GlcNAc...) asparagine glycan. The span at 510 to 539 shows a compositional bias: acidic residues; the sequence is DMDDDDDDDDNDGDNNEEYFADNESGDEDE. At serine 534 the chain carries Phosphoserine. Positions 540–563 are enriched in basic and acidic residues; that stretch reads RVQQSEPHSDSELKSHQQQQEKHQ. Asparagine 580 and asparagine 677 each carry an N-linked (GlcNAc...) asparagine glycan. The interval 671 to 706 is disordered; it reads HDGSHKNGSEEASSDSNENIYSTNGGSDHNGLNNYP. The segment covering 680–706 has biased composition (polar residues); it reads EEASSDSNENIYSTNGGSDHNGLNNYP. 5 helical membrane passes run 778 to 800, 813 to 834, 838 to 858, 862 to 882, and 898 to 918; these read ILVV…WIIL, VSPT…GLTL, SMMS…FIII, GFPI…PDLS, and CFTL…LAGL. N-linked (GlcNAc...) asparagine glycosylation is present at asparagine 919. 2 helical membrane passes run 923–943 and 971–991; these read WILF…SKGY and SIQV…AISI. The disordered stretch occupies residues 1003 to 1063; sequence GLYGDMGGEP…KKKKKTENPN (61 aa). Residues 1010–1031 show a composition bias toward acidic residues; it reads GEPEDTDTEDDGNDEDDDEENE. Residue asparagine 1030 is glycosylated (N-linked (GlcNAc...) asparagine). The span at 1036–1049 shows a compositional bias: low complexity; that stretch reads QSSQRSSSNNNNNN. A run of 2 helical transmembrane segments spans residues 1078–1098 and 1111–1131; these read QLSF…ICEG and IFAI…SLGY. Asparagine 1135 carries N-linked (GlcNAc...) asparagine glycosylation.

This sequence belongs to the TrkH potassium transport family.

The protein resides in the membrane. This protein is required for high-affinity potassium transport. This chain is High-affinity potassium transport protein (TRK1), found in Saccharomyces cerevisiae (strain ATCC 204508 / S288c) (Baker's yeast).